The primary structure comprises 156 residues: MGLPPIECPFDIPKPFRHPDLFDKFSNCDPLPIFFLNRWNESFKVFYQNLDDEHRGLFDVVFDVDAKRGDAGAVSKAASAFKGHFTTEEAEMKKGVDAGKLDGAHYKGHCTAHNKFLELFGSFGNNLGDDEINYSMKWLVNHIKSTDFHYKGKLIQ.

Fe cation contacts are provided by His54, His84, Glu88, His109, His113, His142, and Asp147.

It belongs to the hemerythrin family.

Its function is as follows. Oxygen-binding protein. The oxygen-binding site contains two iron atoms. In Nematostella vectensis (Starlet sea anemone), this protein is Hemerythrin-like protein.